The primary structure comprises 299 residues: Bifunctional protein FolD (299 aa).

NADP(+) contacts are provided by residues 166-168, Ser-191, and Ile-232; that span reads GRS.

It belongs to the tetrahydrofolate dehydrogenase/cyclohydrolase family. In terms of assembly, homodimer.

The enzyme catalyses (6R)-5,10-methylene-5,6,7,8-tetrahydrofolate + NADP(+) = (6R)-5,10-methenyltetrahydrofolate + NADPH. The catalysed reaction is (6R)-5,10-methenyltetrahydrofolate + H2O = (6R)-10-formyltetrahydrofolate + H(+). It functions in the pathway one-carbon metabolism; tetrahydrofolate interconversion. In terms of biological role, catalyzes the oxidation of 5,10-methylenetetrahydrofolate to 5,10-methenyltetrahydrofolate and then the hydrolysis of 5,10-methenyltetrahydrofolate to 10-formyltetrahydrofolate. The chain is Bifunctional protein FolD from Anaplasma marginale (strain St. Maries).